The following is a 281-amino-acid chain: AB hydrolase superfamily protein YclE (281 aa).

An AB hydrolase-1 domain is found at Ser-30–Pro-268. Ser-95 acts as the Nucleophile in catalysis. Residue Asp-232 is part of the active site. The Proton donor role is filled by His-261.

The protein belongs to the AB hydrolase superfamily.

The polypeptide is AB hydrolase superfamily protein YclE (yclE) (Bacillus subtilis (strain 168)).